The following is a 206-amino-acid chain: Probable glutathione S-transferase 8 (206 aa).

The 78-residue stretch at 2 to 79 (VHYKLSYFPI…FLARQFGING (78 aa)) folds into the GST N-terminal domain. Residues Tyr8, Trp39, Lys43, 49–51 (GQL), and 63–64 (QS) each bind glutathione. The 126-residue stretch at 81–206 (CAWEEAQVNS…WLETRPETQF (126 aa)) folds into the GST C-terminal domain.

Belongs to the GST superfamily. Sigma family.

It carries out the reaction RX + glutathione = an S-substituted glutathione + a halide anion + H(+). Conjugation of reduced glutathione to a wide number of exogenous and endogenous hydrophobic electrophiles. The protein is Probable glutathione S-transferase 8 (gst-8) of Caenorhabditis elegans.